Reading from the N-terminus, the 264-residue chain is Proliferating cell nuclear antigen 2 (264 aa).

Belongs to the PCNA family. Homotrimer. Oligomer. Interacts with ORC1 (via PIP-box motif). Interacts with FEN1.

Its subcellular location is the nucleus. The protein resides in the chromosome. It localises to the cytoplasm. May be involved in DNA damage response. Appears not to be involved in DNA replication in trophozoites. The polypeptide is Proliferating cell nuclear antigen 2 (Plasmodium falciparum (isolate 3D7)).